The sequence spans 862 residues: Rho guanine nucleotide exchange factor 7 (862 aa).

Positions 1 to 112 (MNSAEQTVTW…SLVTLNKVTA (112 aa)) constitute a Calponin-homology (CH) domain. Phosphoserine occurs at positions 132, 155, 164, 228, and 236. Positions 163–222 (NSQLVVRAKFNFQQTNEDELSFSKGDVIHVTRVEEGGWWEGTHNGRTGWFPSNYVREIKP) constitute an SH3 domain. In terms of domain architecture, DH spans 250–430 (YYNVVLQNIL…KNLSAQCQEV (181 aa)). The PH domain occupies 452–557 (DIKTLGSVTY…WVEHLQKQTK (106 aa)). The residue at position 497 (Ser497) is a Phosphoserine. Disordered stretches follow at residues 559-591 (TSVS…ADSK), 657-679 (KTMK…EFAV), and 728-748 (DQSS…EPSD). Residues 572–585 (PSHTLPSHPLTPSS) show a composition bias toward polar residues. Over residues 657–669 (KTMKKLLPKRKPE) the composition is skewed to basic residues. A compositionally biased stretch (basic and acidic residues) spans 670–679 (RKPSDEEFAV). Ser673 is modified (phosphoserine). Residues 731-744 (SLDSLGRRSSLSRL) are compositionally biased toward low complexity. Ser776 is modified (phosphoserine). The stretch at 804–854 (KSLVDTVYALKDEVQELRQDNKKMKKSLEEEQRARKDLEKLVRKVLKNMND) forms a coiled coil.

In terms of assembly, interacts with PAK kinases through the SH3 domain. Interacts with unphosphorylated PAK1. Interacts with ITCH. Interacts with SCRIB; interaction is direct and may play a role in regulation of apoptosis. Interacts with GIT1 and TGFB1I1. Interacts with FRMPD4 (via N-terminus). Interacts with CaMK1. Interacts with BIN2. Interacts with PTK2/FAK1 and RAC1. Interacts with PARVB. Interacts with YWHAZ. Interacts (via PH domain) with NOX1 (via FAD-binding FR-type domain). Post-translationally, phosphorylated on Ser-673 by CaMK1; enhancement of GEF activity and downstream activation of RAC1. Phosphorylated by PTK2/FAK1; this promotes interaction with RAC1. As to expression, seems to be expressed in the central nervous system. Isoform B, isoform C and isoform E are expressed with highest levels in brain and testis.

The protein resides in the cell junction. Its subcellular location is the focal adhesion. It is found in the cell projection. It localises to the ruffle. The protein localises to the cytoplasm. The protein resides in the cell cortex. Its subcellular location is the lamellipodium. Acts as a RAC1 guanine nucleotide exchange factor (GEF) and can induce membrane ruffling. May function as a positive regulator of apoptosis. Functions in cell migration, attachment and cell spreading. Promotes targeting of RAC1 to focal adhesions. Downstream of NMDA receptors and CaMKK-CaMK1 signaling cascade, promotes the formation of spines and synapses in hippocampal neurons. The sequence is that of Rho guanine nucleotide exchange factor 7 (Arhgef7) from Mus musculus (Mouse).